A 491-amino-acid polypeptide reads, in one-letter code: Ketol-acid reductoisomerase (NADP(+)) (491 aa).

In terms of domain architecture, KARI N-terminal Rossmann spans 15-208 (AQLGKCRFMG…GGHRAGVLES (194 aa)). Residues 45–48 (CGAQ), Arg-68, Arg-76, Ser-78, and 108–110 (DKQ) contribute to the NADP(+) site. The active site involves His-132. NADP(+) is bound at residue Gly-158. 2 consecutive KARI C-terminal knotted domains span residues 209-344 (SFVA…TAPQ) and 345-484 (YEGK…MTDM). Positions 217, 221, 389, and 393 each coordinate Mg(2+). Ser-414 is a substrate binding site.

It belongs to the ketol-acid reductoisomerase family. Mg(2+) is required as a cofactor.

The enzyme catalyses (2R)-2,3-dihydroxy-3-methylbutanoate + NADP(+) = (2S)-2-acetolactate + NADPH + H(+). It catalyses the reaction (2R,3R)-2,3-dihydroxy-3-methylpentanoate + NADP(+) = (S)-2-ethyl-2-hydroxy-3-oxobutanoate + NADPH + H(+). The protein operates within amino-acid biosynthesis; L-isoleucine biosynthesis; L-isoleucine from 2-oxobutanoate: step 2/4. It functions in the pathway amino-acid biosynthesis; L-valine biosynthesis; L-valine from pyruvate: step 2/4. Involved in the biosynthesis of branched-chain amino acids (BCAA). Catalyzes an alkyl-migration followed by a ketol-acid reduction of (S)-2-acetolactate (S2AL) to yield (R)-2,3-dihydroxy-isovalerate. In the isomerase reaction, S2AL is rearranged via a Mg-dependent methyl migration to produce 3-hydroxy-3-methyl-2-ketobutyrate (HMKB). In the reductase reaction, this 2-ketoacid undergoes a metal-dependent reduction by NADPH to yield (R)-2,3-dihydroxy-isovalerate. This is Ketol-acid reductoisomerase (NADP(+)) from Escherichia coli (strain UTI89 / UPEC).